The following is a 216-amino-acid chain: 3-isopropylmalate dehydratase small subunit (216 aa).

The protein belongs to the LeuD family. LeuD type 1 subfamily. In terms of assembly, heterodimer of LeuC and LeuD.

It carries out the reaction (2R,3S)-3-isopropylmalate = (2S)-2-isopropylmalate. It participates in amino-acid biosynthesis; L-leucine biosynthesis; L-leucine from 3-methyl-2-oxobutanoate: step 2/4. Its function is as follows. Catalyzes the isomerization between 2-isopropylmalate and 3-isopropylmalate, via the formation of 2-isopropylmaleate. The sequence is that of 3-isopropylmalate dehydratase small subunit from Acidovorax ebreus (strain TPSY) (Diaphorobacter sp. (strain TPSY)).